A 384-amino-acid polypeptide reads, in one-letter code: Omega-6 fatty acid desaturase, endoplasmic reticulum (384 aa).

The interval 1-23 (MGAGGRMQVSPSPKKSETDTLKR) is disordered. Over residues 14–23 (KKSETDTLKR) the composition is skewed to basic and acidic residues. Transmembrane regions (helical) follow at residues 56 to 76 (LIWD…YFPL) and 84 to 104 (VAWP…WVIA). The Histidine box-1 motif lies at 105 to 109 (HECGH). A helical transmembrane segment spans residues 117–137 (WLDDTVGLIFHSFLLVPYFSW). Positions 141–145 (HRRHH) match the Histidine box-2 motif. A run of 3 helical transmembrane segments spans residues 180-200 (VMLT…NVSG), 226-246 (IYVS…YAAA), and 253-273 (VCLY…ITYL). Positions 316–320 (HVAHH) match the Histidine box-3 motif.

This sequence belongs to the fatty acid desaturase type 1 family.

The protein resides in the endoplasmic reticulum membrane. Its pathway is lipid metabolism; polyunsaturated fatty acid biosynthesis. Its function is as follows. ER (microsomal) omega-6 fatty acid desaturase introduces the second double bond in the biosynthesis of 18:3 fatty acids, important constituents of plant membranes. It is thought to use cytochrome b5 as an electron donor and to act on fatty acids esterified to phosphatidylcholine and, possibly, other phospholipids. The protein is Omega-6 fatty acid desaturase, endoplasmic reticulum of Brassica juncea (Indian mustard).